A 104-amino-acid chain; its full sequence is Probable RNA-binding protein PA4753 (104 aa).

In terms of domain architecture, CRM spans 1–97 (MALTQEQKKQ…NPKPNKNLSN (97 aa)).

In Pseudomonas aeruginosa (strain ATCC 15692 / DSM 22644 / CIP 104116 / JCM 14847 / LMG 12228 / 1C / PRS 101 / PAO1), this protein is Probable RNA-binding protein PA4753.